The chain runs to 349 residues: Twinfilin-2 (349 aa).

A2 carries the N-acetylalanine modification. 2 consecutive ADF-H domains span residues Q4 to S139 and G177 to H313. Position 14 is an N6-acetyllysine (K14). At Y309 the chain carries Phosphotyrosine. The segment at A322–S349 is disordered. Positions G330 to I339 are enriched in basic residues. Position 349 is a phosphoserine (S349).

This sequence belongs to the actin-binding proteins ADF family. Twinfilin subfamily. Interacts with G-actin; ADP-actin form and capping protein (CP). May also be able to interact with TWF1 and phosphoinositides, PI(4,5)P2. When bound to PI(4,5)P2, it is down-regulated. Interacts with MYO7A. In terms of processing, in vitro, phosphorylated by PRKCZ, CK2 and SRC. In terms of tissue distribution, ubiquitously expressed (at protein level).

It localises to the cytoplasm. Its subcellular location is the cytoskeleton. The protein localises to the perinuclear region. The protein resides in the cell projection. It is found in the stereocilium. Functionally, actin-binding protein involved in motile and morphological processes. Inhibits actin polymerization, likely by sequestering G-actin. By capping the barbed ends of filaments, it also regulates motility. Seems to play an important role in clathrin-mediated endocytosis and distribution of endocytic organelles. May play a role in regulating the mature length of the middle and short rows of stereocilia. This chain is Twinfilin-2 (TWF2), found in Homo sapiens (Human).